A 379-amino-acid polypeptide reads, in one-letter code: Succinyl-diaminopimelate desuccinylase (379 aa).

Zn(2+) is bound at residue histidine 70. Aspartate 72 is an active-site residue. Residue aspartate 103 participates in Zn(2+) binding. Catalysis depends on glutamate 137, which acts as the Proton acceptor. Zn(2+)-binding residues include glutamate 138, glutamate 166, and histidine 352.

Belongs to the peptidase M20A family. DapE subfamily. Homodimer. It depends on Zn(2+) as a cofactor. The cofactor is Co(2+).

The catalysed reaction is N-succinyl-(2S,6S)-2,6-diaminopimelate + H2O = (2S,6S)-2,6-diaminopimelate + succinate. Its pathway is amino-acid biosynthesis; L-lysine biosynthesis via DAP pathway; LL-2,6-diaminopimelate from (S)-tetrahydrodipicolinate (succinylase route): step 3/3. Its function is as follows. Catalyzes the hydrolysis of N-succinyl-L,L-diaminopimelic acid (SDAP), forming succinate and LL-2,6-diaminopimelate (DAP), an intermediate involved in the bacterial biosynthesis of lysine and meso-diaminopimelic acid, an essential component of bacterial cell walls. The protein is Succinyl-diaminopimelate desuccinylase of Shewanella baltica (strain OS195).